A 275-amino-acid polypeptide reads, in one-letter code: Exosome complex component RRP40 (275 aa).

Ala2 carries the N-acetylalanine modification. Residue Lys151 forms a Glycyl lysine isopeptide (Lys-Gly) (interchain with G-Cter in SUMO2) linkage.

The protein belongs to the RRP40 family. In terms of assembly, component of the RNA exosome core complex (Exo-9), composed of EXOSC1, EXOSC2, EXOSC3, EXOSC4, EXOSC5, EXOSC6, EXOSC7, EXOSC8 and EXOSC9; within the complex interacts with EXOSC5 and EXOSC9. The catalytically inactive RNA exosome core complex (Exo-9) associates with the catalytic subunit EXOSC10/RRP6. Exo-9 may associate with DIS3 to form the nucleolar exosome complex, or DIS3L to form the cytoplasmic exosome complex. Exo-9 is formed by a hexameric base ring consisting of the heterodimers EXOSC4-EXOSC9, EXOSC5-EXOSC8 and EXOSC6-EXOSC7, and a cap ring consisting of EXOSC1, EXOSC2 and EXOSC3. The RNA exosome complex associates with cofactors C1D/RRP47, MPHOSPH6/MPP6 and MTREX/MTR4. Interacts with MPHOSPH6/MPP6; the interaction is direct. Interacts with GTPBP1. Interacts with ZC3HAV1. Interacts with DDX17 only in the presence of ZC3HAV1 in an RNA-independent manner. Interacts with DHX36; this interaction occurs in a RNase-insensitive manner. Interacts with HBS1L isoform 2.

The protein resides in the cytoplasm. It is found in the nucleus. Its subcellular location is the nucleolus. Functionally, non-catalytic component of the RNA exosome complex which has 3'-&gt;5' exoribonuclease activity and participates in a multitude of cellular RNA processing and degradation events. In the nucleus, the RNA exosome complex is involved in proper maturation of stable RNA species such as rRNA, snRNA and snoRNA, in the elimination of RNA processing by-products and non-coding 'pervasive' transcripts, such as antisense RNA species and promoter-upstream transcripts (PROMPTs), and of mRNAs with processing defects, thereby limiting or excluding their export to the cytoplasm. The RNA exosome may be involved in Ig class switch recombination (CSR) and/or Ig variable region somatic hypermutation (SHM) by targeting AICDA deamination activity to transcribed dsDNA substrates. In the cytoplasm, the RNA exosome complex is involved in general mRNA turnover and specifically degrades inherently unstable mRNAs containing AU-rich elements (AREs) within their 3' untranslated regions, and in RNA surveillance pathways, preventing translation of aberrant mRNAs. It seems to be involved in degradation of histone mRNA. The catalytic inactive RNA exosome core complex of 9 subunits (Exo-9) is proposed to play a pivotal role in the binding and presentation of RNA for ribonucleolysis, and to serve as a scaffold for the association with catalytic subunits and accessory proteins or complexes. EXOSC3 as peripheral part of the Exo-9 complex stabilizes the hexameric ring of RNase PH-domain subunits through contacts with EXOSC9 and EXOSC5. The protein is Exosome complex component RRP40 (EXOSC3) of Homo sapiens (Human).